The sequence spans 402 residues: 8-amino-7-oxononanoate synthase (402 aa).

Position 26 (arginine 26) interacts with substrate. 114-115 contacts pyridoxal 5'-phosphate; sequence GY. Residue histidine 139 coordinates substrate. Pyridoxal 5'-phosphate is bound by residues serine 182, histidine 210, and threonine 239. Position 242 is an N6-(pyridoxal phosphate)lysine (lysine 242). Substrate is bound at residue threonine 359.

This sequence belongs to the class-II pyridoxal-phosphate-dependent aminotransferase family. BioF subfamily. Homodimer. Requires pyridoxal 5'-phosphate as cofactor.

The catalysed reaction is 6-carboxyhexanoyl-[ACP] + L-alanine + H(+) = (8S)-8-amino-7-oxononanoate + holo-[ACP] + CO2. It functions in the pathway cofactor biosynthesis; biotin biosynthesis. Functionally, catalyzes the decarboxylative condensation of pimeloyl-[acyl-carrier protein] and L-alanine to produce 8-amino-7-oxononanoate (AON), [acyl-carrier protein], and carbon dioxide. The sequence is that of 8-amino-7-oxononanoate synthase from Halorhodospira halophila (strain DSM 244 / SL1) (Ectothiorhodospira halophila (strain DSM 244 / SL1)).